The chain runs to 273 residues: Flagellin FljN (273 aa).

Belongs to the bacterial flagellin family. As to quaternary structure, in C.crescentus, the flagellar filament is composed of multiple flagellins of 29 kDa; 27 kDa and 25 kDa.

The protein resides in the secreted. It localises to the bacterial flagellum. In terms of biological role, flagellin is the subunit protein which polymerizes to form the filaments of bacterial flagella. The protein is Flagellin FljN (fljN) of Caulobacter vibrioides (strain ATCC 19089 / CIP 103742 / CB 15) (Caulobacter crescentus).